The sequence spans 215 residues: Adenylate kinase (215 aa).

10-15 (GAGKGT) is a binding site for ATP. Residues 30-59 (STGDMFRLAIKEGTELGKKAKEFMDQGDLV) form an NMP region. AMP is bound by residues Thr-31, Arg-36, 57–59 (DLV), 85–88 (GFPR), and Gln-92. An LID region spans residues 126-163 (GRRICPTCGTAYHVVYNPPKEEGICDKDGSQLIQRDDD). Residue Arg-127 coordinates ATP. Zn(2+) is bound by residues Cys-130, Cys-133, Cys-150, and Asp-153. AMP-binding residues include Arg-160 and Arg-171. Residue Arg-199 participates in ATP binding.

Belongs to the adenylate kinase family. As to quaternary structure, monomer.

Its subcellular location is the cytoplasm. It carries out the reaction AMP + ATP = 2 ADP. It functions in the pathway purine metabolism; AMP biosynthesis via salvage pathway; AMP from ADP: step 1/1. Its function is as follows. Catalyzes the reversible transfer of the terminal phosphate group between ATP and AMP. Plays an important role in cellular energy homeostasis and in adenine nucleotide metabolism. The chain is Adenylate kinase from Oceanobacillus iheyensis (strain DSM 14371 / CIP 107618 / JCM 11309 / KCTC 3954 / HTE831).